A 153-amino-acid polypeptide reads, in one-letter code: Calmodulin-like protein 3 (153 aa).

4 EF-hand domains span residues 1 to 36 (MDQA…LGIY), 37 to 72 (IPDK…IMEE), 74 to 109 (DEEE…LGLK), and 112 to 147 (RTLE…GGFA). Residues D14, N16, D18, K20, E25, D50, N52, D54, Y56, E61, D87, N89, D91, E98, D125, D127, D129, M131, and E136 each coordinate Ca(2+).

It belongs to the calmodulin family.

Its function is as follows. Potential calcium sensor. This Arabidopsis thaliana (Mouse-ear cress) protein is Calmodulin-like protein 3 (CML3).